The chain runs to 141 residues: MAMTVHCDVVSAEESIFSGLVEIAVFPGEAGELGILPRHTPLLTRIKPGTIRLKVPDQSEFELVYVSGGMLEVQPDMITVLADTAIRAHDLDEAKALEAKKRAEEALANRNAEMDYAAAEAELAQAVAQLQAIQRLRKHTH.

This sequence belongs to the ATPase epsilon chain family. As to quaternary structure, F-type ATPases have 2 components, CF(1) - the catalytic core - and CF(0) - the membrane proton channel. CF(1) has five subunits: alpha(3), beta(3), gamma(1), delta(1), epsilon(1). CF(0) has three main subunits: a, b and c.

Its subcellular location is the cell inner membrane. In terms of biological role, produces ATP from ADP in the presence of a proton gradient across the membrane. The protein is ATP synthase epsilon chain of Dechloromonas aromatica (strain RCB).